We begin with the raw amino-acid sequence, 689 residues long: Glycine--tRNA ligase beta subunit (689 aa).

This sequence belongs to the class-II aminoacyl-tRNA synthetase family. Tetramer of two alpha and two beta subunits.

Its subcellular location is the cytoplasm. The catalysed reaction is tRNA(Gly) + glycine + ATP = glycyl-tRNA(Gly) + AMP + diphosphate. This Sodalis glossinidius (strain morsitans) protein is Glycine--tRNA ligase beta subunit.